The sequence spans 293 residues: AM-toxin biosynthesis protein 14 (293 aa).

The next 5 membrane-spanning stretches (helical) occupy residues 33–53, 73–93, 148–168, 183–203, and 221–241; these read SATA…EVYI, IAVN…ALVL, GVLA…LCVW, LVPI…LWIL, and VWCL…TPLT.

It is found in the membrane. It functions in the pathway mycotoxin biosynthesis. Functionally, part of the gene clusters that mediate the biosynthesis of AM-toxins, host-selective toxins (HSTs) causing Alternaria blotch on apple, a worldwide distributed disease. AM-toxins are cyclic depsipeptides containing the 3 residues 2-hydroxy-isovaleric acid (2-HIV), dehydroalanine, L-alanine which are common for all 3 AM-toxins I to III. The fourth precursor is L-alpha-amino-methoxyphenyl-valeric acid (L-Amv) for AM-toxin I, L-alpha-amino-phenyl-valeric acid (L-Apv) for AM-toxin II, and L-alpha-amino-hydroxyphenyl-valeric acid (L-Ahv) for AM-toxin III. AM-toxins have two target sites for affecting susceptible apple cells; they cause invagination of the plasma membrane and electrolyte loss and chloroplast disorganization. The non-ribosomal peptide synthetase AMT1 contains 4 catalytic modules and is responsible for activation of each residue in AM-toxin. The aldo-keto reductase AMT2 catalyzes the conversion of 2-keto-isovaleric acid (2-KIV) to 2-hydroxy-isovaleric acid (2-HIV), one of the precursor residues incorporated by AMT1 during AM-toxin biosynthesis, by reduction of its ketone to an alcohol. The cytochrome P450 monooxygenase AMT3 and the thioesterase AMT4 are also important for AM-toxin production, but their exact function within the AM-toxin biosynthesis are not known yet. Up to 21 proteins (including AMT1 to AMT4) are predicted to be involved in AM-toxin biosynthesis since their expression ishighly up-regulated in AM-toxin-producing cultures. This is AM-toxin biosynthesis protein 14 from Alternaria alternata (Alternaria rot fungus).